The following is a 374-amino-acid chain: UPF0754 membrane protein SAR1937 (374 aa).

The next 2 membrane-spanning stretches (helical) occupy residues 4–24 (LFII…TNVI) and 354–374 (SLGF…AIFV).

This sequence belongs to the UPF0754 family.

The protein resides in the cell membrane. The chain is UPF0754 membrane protein SAR1937 from Staphylococcus aureus (strain MRSA252).